Reading from the N-terminus, the 793-residue chain is PC3-like endoprotease variant A (793 aa).

The N-terminal stretch at 1–29 (MNYRGIYRRRYVFVLLLLVAVVNISYGWT) is a signal peptide. Residues 30–152 (VLKNKDYKRR…QQKILERVKR (123 aa)) constitute a propeptide that is removed on maturation. 2 N-linked (GlcNAc...) asparagine glycosylation sites follow: Asn62 and Asn190. Residues 164 to 486 (MWYLLNTGQA…FGRLDANAMV (323 aa)) form the Peptidase S8 domain. Residues Asp202 and His242 each act as charge relay system in the active site. 2 disulfides stabilise this stretch: Cys259–Cys411 and Cys351–Cys381. The active-site Charge relay system is the Ser419. In terms of domain architecture, P/Homo B spans 495–638 (LPAQRKCTAA…EERVIDTQTK (144 aa)). Cys501 and Cys527 are oxidised to a cystine.

It belongs to the peptidase S8 family. Furin subfamily. As to expression, predominantly in the body column.

Functionally, probably involved in the processing of hormone and other protein precursors at sites comprised of pairs of basic amino acid residues. This is PC3-like endoprotease variant A from Hydra vulgaris (Hydra).